The following is a 155-amino-acid chain: MKIQLIAVGTKMPDWVTKGFEEYQRRFPKDMPFELIEIPAGKRGKNADIKRILEQEGKAMLSACQKSRIITLDIPGKPWTTEQLAQQLEAWKHDGRNVALLIGGPEGLSPECKAATEQSWSLSPLTLPHPLVRIIVAESLYRAWSLSTNHPYHRE.

S-adenosyl-L-methionine-binding positions include Leu-72, Gly-103, and 122–127 (LSPLTL).

It belongs to the RNA methyltransferase RlmH family. In terms of assembly, homodimer.

It is found in the cytoplasm. It catalyses the reaction pseudouridine(1915) in 23S rRNA + S-adenosyl-L-methionine = N(3)-methylpseudouridine(1915) in 23S rRNA + S-adenosyl-L-homocysteine + H(+). Specifically methylates the pseudouridine at position 1915 (m3Psi1915) in 23S rRNA. This is Ribosomal RNA large subunit methyltransferase H from Histophilus somni (strain 129Pt) (Haemophilus somnus).